The following is a 152-amino-acid chain: UPF0178 protein SaurJH9_0705 (152 aa).

Belongs to the UPF0178 family.

In Staphylococcus aureus (strain JH9), this protein is UPF0178 protein SaurJH9_0705.